The sequence spans 179 residues: Inorganic pyrophosphatase (179 aa).

Positions 30, 44, and 56 each coordinate substrate. Residues aspartate 66, aspartate 71, and aspartate 103 each contribute to the Mg(2+) site. Substrate is bound at residue tyrosine 142.

Belongs to the PPase family. In terms of assembly, homohexamer. The cofactor is Mg(2+).

It is found in the cytoplasm. The enzyme catalyses diphosphate + H2O = 2 phosphate + H(+). Its function is as follows. Catalyzes the hydrolysis of inorganic pyrophosphate (PPi) forming two phosphate ions. In Rhodospirillum rubrum (strain ATCC 11170 / ATH 1.1.1 / DSM 467 / LMG 4362 / NCIMB 8255 / S1), this protein is Inorganic pyrophosphatase.